The following is a 229-amino-acid chain: MVKKKAFLPLLYLTSIVFLPWWISLSFNKSLEFWITNWWNTRQSETFLTDIQEKSILEKFIELEELLLLDEMIKEYPETHLQTLRIGIHKETIQLIKMHNEDHIHMILHLSTNITSFIILSGYSILGNEELAILNSWVQEFLYNLSDTIKAFSILLLTDLCIGFHSPHGWELMIGYVYKDFGFAHNDQIISGLVSTFPVILDTIFKYWIFRYLNRISPSLVVIYHSMND.

The next 3 membrane-spanning stretches (helical) occupy residues 7-27, 106-126, and 189-209; these read FLPL…SLSF, MILH…YSIL, and IISG…KYWI.

It belongs to the CemA family.

The protein localises to the plastid. It is found in the chloroplast inner membrane. The enzyme catalyses K(+)(in) + H(+)(out) = K(+)(out) + H(+)(in). Functionally, contributes to K(+)/H(+) antiport activity by supporting proton efflux to control proton extrusion and homeostasis in chloroplasts in a light-dependent manner to modulate photosynthesis. Prevents excessive induction of non-photochemical quenching (NPQ) under continuous-light conditions. Indirectly promotes efficient inorganic carbon uptake into chloroplasts. This Eucalyptus globulus subsp. globulus (Tasmanian blue gum) protein is Potassium/proton antiporter CemA.